Here is a 172-residue protein sequence, read N- to C-terminus: Translationally-controlled tumor protein homolog (172 aa).

Residues 1–172 enclose the TCTP domain; that stretch reads MIIFKDLLTG…FKHGLDEEKV (172 aa).

The protein belongs to the TCTP family. Expressed by the venom gland.

The protein resides in the secreted. Venom protein that causes edema, enhances vascular permeability and is likely related to the inflammatory activity of the venom. This Loxosceles intermedia (Brown spider) protein is Translationally-controlled tumor protein homolog.